The following is a 240-amino-acid chain: PF03932 family protein CutC (240 aa).

Belongs to the CutC family.

It is found in the cytoplasm. The protein is PF03932 family protein CutC of Xanthomonas campestris pv. campestris (strain B100).